The sequence spans 332 residues: ATP-dependent (S)-NAD(P)H-hydrate dehydratase (332 aa).

A YjeF C-terminal domain is found at 46 to 326 (LLERARNIVP…EQIHNVFDDI (281 aa)). (6S)-NADPHX is bound by residues Gly-146 and 199 to 205 (NAIEFCR). Residues 230 to 234 (KGLND) and 251 to 260 (GSGRRCGGQG) each bind ATP. Residue Asp-261 participates in (6S)-NADPHX binding.

It belongs to the NnrD/CARKD family. The cofactor is Mg(2+).

The catalysed reaction is (6S)-NADHX + ATP = ADP + phosphate + NADH + H(+). It catalyses the reaction (6S)-NADPHX + ATP = ADP + phosphate + NADPH + H(+). Catalyzes the dehydration of the S-form of NAD(P)HX at the expense of ATP, which is converted to ADP. Together with NAD(P)HX epimerase, which catalyzes the epimerization of the S- and R-forms, the enzyme allows the repair of both epimers of NAD(P)HX, a damaged form of NAD(P)H that is a result of enzymatic or heat-dependent hydration. This is ATP-dependent (S)-NAD(P)H-hydrate dehydratase from Aedes aegypti (Yellowfever mosquito).